A 319-amino-acid chain; its full sequence is Acetyl-coenzyme A carboxylase carboxyl transferase subunit alpha (319 aa).

Residues 39 to 293 form the CoA carboxyltransferase C-terminal domain; sequence RLQKKSNDLT…KAVLEKQLHE (255 aa).

The protein belongs to the AccA family. In terms of assembly, acetyl-CoA carboxylase is a heterohexamer composed of biotin carboxyl carrier protein (AccB), biotin carboxylase (AccC) and two subunits each of ACCase subunit alpha (AccA) and ACCase subunit beta (AccD).

The protein resides in the cytoplasm. It carries out the reaction N(6)-carboxybiotinyl-L-lysyl-[protein] + acetyl-CoA = N(6)-biotinyl-L-lysyl-[protein] + malonyl-CoA. It participates in lipid metabolism; malonyl-CoA biosynthesis; malonyl-CoA from acetyl-CoA: step 1/1. Component of the acetyl coenzyme A carboxylase (ACC) complex. First, biotin carboxylase catalyzes the carboxylation of biotin on its carrier protein (BCCP) and then the CO(2) group is transferred by the carboxyltransferase to acetyl-CoA to form malonyl-CoA. In Neisseria meningitidis serogroup C (strain 053442), this protein is Acetyl-coenzyme A carboxylase carboxyl transferase subunit alpha.